The primary structure comprises 243 residues: Small ribosomal subunit protein uS5 (243 aa).

Residues 1–10 show a composition bias toward basic and acidic residues; it reads MSDNETKETQ. The interval 1-50 is disordered; that stretch reads MSDNETKETQVAEETQNTVATESNNEDRKGRRGQRGEGRRGERRNRREEN. The segment covering 12 to 23 has biased composition (polar residues); sequence AEETQNTVATES. Basic and acidic residues predominate over residues 25–50; sequence NEDRKGRRGQRGEGRRGERRNRREEN. An S5 DRBM domain is found at 55-118; the sequence is LLDRVVTINR…LDAKKHMFSV (64 aa).

The protein belongs to the universal ribosomal protein uS5 family. In terms of assembly, part of the 30S ribosomal subunit. Contacts proteins S4 and S8.

With S4 and S12 plays an important role in translational accuracy. Functionally, located at the back of the 30S subunit body where it stabilizes the conformation of the head with respect to the body. This is Small ribosomal subunit protein uS5 from Bifidobacterium longum (strain DJO10A).